We begin with the raw amino-acid sequence, 300 residues long: GTPase Era (300 aa).

Residues 8-176 enclose the Era-type G domain; it reads RCGYVAIVGR…EALIAKHLPE (169 aa). A G1 region spans residues 16–23; the sequence is GRPNVGKS. Position 16 to 23 (16 to 23) interacts with GTP; it reads GRPNVGKS. The G2 stretch occupies residues 42 to 46; sequence QTTRH. A G3 region spans residues 63 to 66; sequence DTPG. GTP-binding positions include 63 to 67 and 125 to 128; these read DTPGM and NKTD. The segment at 125–128 is G4; the sequence is NKTD. Residues 155-157 form a G5 region; it reads ISA. The KH type-2 domain occupies 199–283; that stretch reads VREKIMRQLG…MLNLWVKVKG (85 aa).

This sequence belongs to the TRAFAC class TrmE-Era-EngA-EngB-Septin-like GTPase superfamily. Era GTPase family. In terms of assembly, monomer.

The protein localises to the cytoplasm. It is found in the cell inner membrane. In terms of biological role, an essential GTPase that binds both GDP and GTP, with rapid nucleotide exchange. Plays a role in 16S rRNA processing and 30S ribosomal subunit biogenesis and possibly also in cell cycle regulation and energy metabolism. The polypeptide is GTPase Era (Pseudomonas putida (strain W619)).